The following is a 45-amino-acid chain: Photosystem I reaction center subunit IX 1 (45 aa).

A helical transmembrane segment spans residues 9-29; the sequence is WFRSAPVVATIWITLTAGIIV.

The protein belongs to the PsaJ family.

It is found in the cellular thylakoid membrane. Functionally, may help in the organization of the PsaE and PsaF subunits. The sequence is that of Photosystem I reaction center subunit IX 1 from Prochlorococcus marinus (strain NATL1A).